The following is a 229-amino-acid chain: Growth factor receptor-bound protein 2 (229 aa).

SH3 domains are found at residues 1-58 (MEAV…MKPH) and 168-227 (QQPT…PVNR). One can recognise an SH2 domain in the interval 60 to 171 (WFFGKIPRAK…RATNLLQQPT (112 aa)).

The protein localises to the nucleus. It is found in the cytoplasm. The protein resides in the endosome. It localises to the golgi apparatus. Its function is as follows. Adapter protein that provides a critical link between cell surface growth factor receptors and the Ras signaling pathway. Promotes meiotic reinitiation during oocyte maturation. This chain is Growth factor receptor-bound protein 2, found in Xenopus tropicalis (Western clawed frog).